A 327-amino-acid polypeptide reads, in one-letter code: Tetraacyldisaccharide 4'-kinase (327 aa).

Threonine 52 to threonine 59 contacts ATP.

This sequence belongs to the LpxK family.

It carries out the reaction a lipid A disaccharide + ATP = a lipid IVA + ADP + H(+). It functions in the pathway glycolipid biosynthesis; lipid IV(A) biosynthesis; lipid IV(A) from (3R)-3-hydroxytetradecanoyl-[acyl-carrier-protein] and UDP-N-acetyl-alpha-D-glucosamine: step 6/6. Transfers the gamma-phosphate of ATP to the 4'-position of a tetraacyldisaccharide 1-phosphate intermediate (termed DS-1-P) to form tetraacyldisaccharide 1,4'-bis-phosphate (lipid IVA). This chain is Tetraacyldisaccharide 4'-kinase, found in Methylorubrum extorquens (strain PA1) (Methylobacterium extorquens).